A 485-amino-acid polypeptide reads, in one-letter code: Cysteine--tRNA ligase (485 aa).

Cys-27 lines the Zn(2+) pocket. A 'HIGH' region motif is present at residues 29–39; it reads ITAYDLCHIGH. Zn(2+)-binding residues include Cys-208, His-233, and Glu-237. The short motif at 265–269 is the 'KMSKS' region element; that stretch reads KMSKS. Lys-268 provides a ligand contact to ATP.

The protein belongs to the class-I aminoacyl-tRNA synthetase family. In terms of assembly, monomer. The cofactor is Zn(2+).

The protein localises to the cytoplasm. The enzyme catalyses tRNA(Cys) + L-cysteine + ATP = L-cysteinyl-tRNA(Cys) + AMP + diphosphate. The polypeptide is Cysteine--tRNA ligase (Maridesulfovibrio salexigens (strain ATCC 14822 / DSM 2638 / NCIMB 8403 / VKM B-1763) (Desulfovibrio salexigens)).